The chain runs to 238 residues: Type III pantothenate kinase (238 aa).

7–14 (DAGNSGLK) provides a ligand contact to ATP. Residues tyrosine 88 and 95 to 98 (GVDR) each bind substrate. Aspartate 97 serves as the catalytic Proton acceptor. Aspartate 117 serves as a coordination point for K(+). An ATP-binding site is contributed by threonine 120. Substrate is bound at residue threonine 172.

It belongs to the type III pantothenate kinase family. As to quaternary structure, homodimer. NH4(+) is required as a cofactor. The cofactor is K(+).

The protein resides in the cytoplasm. It carries out the reaction (R)-pantothenate + ATP = (R)-4'-phosphopantothenate + ADP + H(+). It functions in the pathway cofactor biosynthesis; coenzyme A biosynthesis; CoA from (R)-pantothenate: step 1/5. Catalyzes the phosphorylation of pantothenate (Pan), the first step in CoA biosynthesis. The chain is Type III pantothenate kinase from Hahella chejuensis (strain KCTC 2396).